The sequence spans 130 residues: Movement protein TGB2 (130 aa).

Over 1–12 (MPGLTPPVNYEQ) the chain is Cytoplasmic. Residues 13-30 (VYKVLAIGFLLCASIYCL) traverse the membrane as a helical segment. Residues 31–72 (RSNHLPHVGDNIHSLPHGGNYADGTKRVQYFRPHSSTSTNHK) are Lumenal-facing. A helical transmembrane segment spans residues 73 to 90 (YTALCAVLTLSLLIFAQT). The Cytoplasmic segment spans residues 91–130 (RLAAGNRITSVSICHHCSSQGSLSGGNHGRVSGHSELPTT). The segment at 110 to 130 (QGSLSGGNHGRVSGHSELPTT) is disordered.

This sequence belongs to the Tymovirales TGBp2 protein family.

Its subcellular location is the host endoplasmic reticulum membrane. In terms of biological role, plays a role in viral cell-to-cell propagation, by facilitating genome transport to neighboring plant cells through plasmosdesmata,. This chain is Movement protein TGB2, found in Narcissus pseudonarcissus (Daffodil).